A 785-amino-acid polypeptide reads, in one-letter code: Endonuclease MutS2 (785 aa).

Residue 335–342 participates in ATP binding; the sequence is GPNTGGKT. Residues 710–785 enclose the Smr domain; sequence LDLRGERYEE…GLGNTVVELR (76 aa). A disordered region spans residues 764-785; that stretch reads VKSARDGGANEGGLGNTVVELR.

This sequence belongs to the DNA mismatch repair MutS family. MutS2 subfamily. In terms of assembly, homodimer. Binds to stalled ribosomes, contacting rRNA.

Endonuclease that is involved in the suppression of homologous recombination and thus may have a key role in the control of bacterial genetic diversity. Its function is as follows. Acts as a ribosome collision sensor, splitting the ribosome into its 2 subunits. Detects stalled/collided 70S ribosomes which it binds and splits by an ATP-hydrolysis driven conformational change. Acts upstream of the ribosome quality control system (RQC), a ribosome-associated complex that mediates the extraction of incompletely synthesized nascent chains from stalled ribosomes and their subsequent degradation. Probably generates substrates for RQC. This Halalkalibacterium halodurans (strain ATCC BAA-125 / DSM 18197 / FERM 7344 / JCM 9153 / C-125) (Bacillus halodurans) protein is Endonuclease MutS2.